We begin with the raw amino-acid sequence, 882 residues long: Nucleoporin NUP82 (882 aa).

The segment at 76–98 is disordered; the sequence is WESRPSRSSVGPTSTKKDSSDFD. Coiled coils occupy residues 676-762 and 806-829; these read TEVS…GRTT and KRLEEIKTLRNALMAEAEQLQKVG.

Component of the nuclear pore complex (NPC). NPC constitutes the exclusive means of nucleocytoplasmic transport. NPCs allow the passive diffusion of ions and small molecules and the active, nuclear transport receptor-mediated bidirectional transport of macromolecules such as proteins, RNAs, ribonucleoparticles (RNPs), and ribosomal subunits across the nuclear envelope. Due to its 8-fold rotational symmetry, all subunits are present with 8 copies or multiples thereof.

Its subcellular location is the nucleus. It localises to the nuclear pore complex. It is found in the nucleus membrane. In terms of biological role, functions as a component of the nuclear pore complex (NPC). NPC components, collectively referred to as nucleoporins (NUPs), can play the role of both NPC structural components and of docking or interaction partners for transiently associated nuclear transport factors. The polypeptide is Nucleoporin NUP82 (NUP82) (Chaetomium thermophilum (strain DSM 1495 / CBS 144.50 / IMI 039719) (Thermochaetoides thermophila)).